The sequence spans 187 residues: Elongation factor P (187 aa).

The protein belongs to the elongation factor P family.

It localises to the cytoplasm. The protein operates within protein biosynthesis; polypeptide chain elongation. In terms of biological role, involved in peptide bond synthesis. Stimulates efficient translation and peptide-bond synthesis on native or reconstituted 70S ribosomes in vitro. Probably functions indirectly by altering the affinity of the ribosome for aminoacyl-tRNA, thus increasing their reactivity as acceptors for peptidyl transferase. This is Elongation factor P from Mycobacterium ulcerans (strain Agy99).